We begin with the raw amino-acid sequence, 1382 residues long: Histone-lysine N-methyltransferase SUVR5 (1382 aa).

Disordered stretches follow at residues 43–62 (TVTG…SEPK) and 354–373 (GNTN…NTPE). 3 consecutive C2H2-type zinc fingers follow at residues 735–758 (FACA…EERH), 769–792 (LQCI…QAVH), and 838–861 (FVCK…QAEH). A disordered region spans residues 915 to 935 (RRMQGSKSLGTEGNTEAGVSP). Over residues 919-928 (GSKSLGTEGN) the composition is skewed to polar residues. A Pre-SET domain is found at 1145 to 1221 (LRCSCRSSVC…TCQNRVLQNG (77 aa)). Positions 1147, 1149, 1154, 1159, 1182, 1203, 1207, 1209, and 1213 each coordinate Zn(2+). The SET domain occupies 1224–1356 (AKLEVFRTES…AGEEITRDYG (133 aa)). S-adenosyl-L-methionine is bound by residues 1234-1236 (KGW), Tyr1277, and 1313-1314 (NH). Residue Cys1316 participates in Zn(2+) binding. Tyr1355 contributes to the S-adenosyl-L-methionine binding site. The 17-residue stretch at 1366-1382 (NEHPCHCKATNCRGLLS) folds into the Post-SET domain. Zn(2+)-binding residues include Cys1370, Cys1372, and Cys1377.

This sequence belongs to the class V-like SAM-binding methyltransferase superfamily. In terms of assembly, component of a regulatory complex with LDL1/SWP1. Interacts with LDL1/SWP1.

The protein localises to the nucleus. Its subcellular location is the chromosome. It catalyses the reaction L-lysyl-[histone] + S-adenosyl-L-methionine = N(6)-methyl-L-lysyl-[histone] + S-adenosyl-L-homocysteine + H(+). Histone methyltransferase that functions together with its binding partner LDL1/SWP1 as one of the regulators of flower timing in Arabidopsis. Mediates H3K9me2 deposition and regulates gene expression in a DNA methylation-independent manner. Binds DNA through its zinc fingers and represses the expression of a subset of stimulus response genes. May represent a novel mechanism for plants to regulate their chromatin and transcriptional state, which may allow for the adaptability and modulation necessary to rapidly respond to environment or developmental cues. The chain is Histone-lysine N-methyltransferase SUVR5 from Arabidopsis thaliana (Mouse-ear cress).